A 192-amino-acid chain; its full sequence is A-type ATP synthase subunit E (192 aa).

The protein belongs to the V-ATPase E subunit family. As to quaternary structure, has multiple subunits with at least A(3), B(3), C, D, E, F, H, I and proteolipid K(x).

It is found in the cell membrane. In terms of biological role, component of the A-type ATP synthase that produces ATP from ADP in the presence of a proton gradient across the membrane. The chain is A-type ATP synthase subunit E from Methanocorpusculum labreanum (strain ATCC 43576 / DSM 4855 / Z).